Here is a 440-residue protein sequence, read N- to C-terminus: Transposon Ty1-DR2 Gag polyprotein (440 aa).

Composition is skewed to polar residues over residues 1 to 31 and 137 to 168; these read MESQQLSQHSPISHGSACASVTSKEVQTTQD and VGTHLNTPSPESGNSFPDSSSAKSNMTSTNQH. Disordered regions lie at residues 1 to 75, 137 to 174, and 350 to 440; these read MESQ…PQAA, VGTHLNTPSPESGNSFPDSSSAKSNMTSTNQHVRPPPI, and QQES…PGTY. Positions 299 to 401 are RNA-binding; the sequence is NNGIPINNKV…NSQSRTARAH (103 aa). Over residues 363 to 372 the composition is skewed to basic and acidic residues; it reads SPSDEKKDSR. Positions 373–409 are enriched in polar residues; it reads TYTNTTKPKSITRNSQKPNNSQSRTARAHNVSTSNNF. Residues 429–440 show a composition bias toward basic and acidic residues; it reads NKHDLHLRPGTY.

As to quaternary structure, homotrimer.

It is found in the cytoplasm. Capsid protein (CA) is the structural component of the virus-like particle (VLP), forming the shell that encapsulates the retrotransposons dimeric RNA genome. The particles are assembled from trimer-clustered units and there are holes in the capsid shells that allow for the diffusion of macromolecules. CA also has nucleocapsid-like chaperone activity, promoting primer tRNA(i)-Met annealing to the multipartite primer-binding site (PBS), dimerization of Ty1 RNA and initiation of reverse transcription. This chain is Transposon Ty1-DR2 Gag polyprotein (TY1A-DR2), found in Saccharomyces cerevisiae (strain ATCC 204508 / S288c) (Baker's yeast).